We begin with the raw amino-acid sequence, 652 residues long: uncharacterized protein (652 aa).

A compositionally biased stretch (basic and acidic residues) spans Met-1 to Lys-13. The disordered stretch occupies residues Met-1–Thr-21.

Belongs to the ParB family.

This is an uncharacterized protein from Escherichia coli (strain K12).